Here is a 388-residue protein sequence, read N- to C-terminus: Flap endonuclease 1 (388 aa).

The interval 1 to 104 (MGILGLSKLI…GELAKRAERR (104 aa)) is N-domain. Residue D34 participates in Mg(2+) binding. DNA contacts are provided by R47 and R70. Mg(2+)-binding residues include D86, E158, E160, D179, and D181. An I-domain region spans residues 122 to 253 (EIEKFNRRLV…KRAIELINSY (132 aa)). Residue E158 coordinates DNA. DNA is bound by residues G231 and D233. Mg(2+) is bound at residue D233. Residues 336–344 (TQVRLDSFF) are interaction with PCNA. The disordered stretch occupies residues 355 to 388 (AAAKRKAEEAKKSANNKKAKIGGGGGAGRGRRPK).

It belongs to the XPG/RAD2 endonuclease family. FEN1 subfamily. Interacts with PCNA. Three molecules of FEN1 bind to one PCNA trimer with each molecule binding to one PCNA monomer. PCNA stimulates the nuclease activity without altering cleavage specificity. Mg(2+) serves as cofactor. Phosphorylated. Phosphorylation upon DNA damage induces relocalization to the nuclear plasma.

Its subcellular location is the nucleus. The protein resides in the nucleolus. The protein localises to the nucleoplasm. It localises to the mitochondrion. Its function is as follows. Structure-specific nuclease with 5'-flap endonuclease and 5'-3' exonuclease activities involved in DNA replication and repair. During DNA replication, cleaves the 5'-overhanging flap structure that is generated by displacement synthesis when DNA polymerase encounters the 5'-end of a downstream Okazaki fragment. It enters the flap from the 5'-end and then tracks to cleave the flap base, leaving a nick for ligation. Also involved in the long patch base excision repair (LP-BER) pathway, by cleaving within the apurinic/apyrimidinic (AP) site-terminated flap. Acts as a genome stabilization factor that prevents flaps from equilibrating into structures that lead to duplications and deletions. Also possesses 5'-3' exonuclease activity on nicked or gapped double-stranded DNA, and exhibits RNase H activity. Also involved in replication and repair of rDNA and in repairing mitochondrial DNA. This is Flap endonuclease 1 from Drosophila willistoni (Fruit fly).